A 1712-amino-acid polypeptide reads, in one-letter code: Latent-transforming growth factor beta-binding protein 1 (1712 aa).

Residues 1-23 (MAGAWLRWGLLLWAGLLAWSAHG) form the signal peptide. Residues 65–118 (TAASSRALAGPPAERTRRTSQPGGAALPGLRSPLPPEPARPGGPSRQLHSKAGA) form a disordered region. Residues 181–213 (TKPSCVPPCQNGGMCLRPQLCVCKPGSKGKACE) enclose the EGF-like 1 domain. Intrachain disulfides connect Cys-185–Cys-195, Cys-189–Cys-201, and Cys-203–Cys-212. N-linked (GlcNAc...) asparagine glycans are attached at residues Asn-339 and Asn-370. The region spanning 391–423 (RVVICHLPCMNGGQCSSRDKCQCPPNFTGKLCQ) is the EGF-like 2 domain. Disulfide bonds link Cys-395/Cys-405, Cys-399/Cys-411, Cys-413/Cys-422, Cys-551/Cys-573, Cys-560/Cys-586, and Cys-574/Cys-589. Asn-416 is a glycosylation site (N-linked (GlcNAc...) asparagine). In terms of domain architecture, TB 1 spans 549 to 601 (GRCFQETIGSQCGKALPGLSKQEDCCGTVGTSWGFNKCQKCPKKQSYHGYTQM). Asn-612 carries an N-linked (GlcNAc...) asparagine glycan. Residues 618-658 (DINECQLQGVCPNGECLNTMGSYRCSCKMGFGPDPTFSSCV) form the EGF-like 3; calcium-binding domain. Cystine bridges form between Cys-622–Cys-633, Cys-628–Cys-642, Cys-644–Cys-657, Cys-671–Cys-694, Cys-681–Cys-706, Cys-695–Cys-709, and Cys-696–Cys-721. Ser-639 is a glycosylation site (O-linked (Glc) serine). A TB 2 domain is found at 669-721 (GPCYRLVSPGRHCMHPLSVHLTKQICCCSVGKAWGPHCEKCPLPGTAAFKEIC). The segment at 753-799 (NTQPVAKSTHPPPLPAKEEPVEALTSSWEHGPRGAEPEVVTAPPEKE) is disordered. 2 O-linked (GalNAc...) threonine glycosylation sites follow: Thr-761 and Thr-793. Residues 865–906 (EINECTVNPDICGAGHCINLPVRYTCICYEGYKFSEQLRKCV) form the EGF-like 4; calcium-binding domain. Cystine bridges form between Cys-869/Cys-881, Cys-876/Cys-890, Cys-892/Cys-905, Cys-911/Cys-923, Cys-918/Cys-932, Cys-934/Cys-947, Cys-953/Cys-964, Cys-959/Cys-973, Cys-976/Cys-988, Cys-994/Cys-1005, Cys-1000/Cys-1014, Cys-1017/Cys-1028, Cys-1034/Cys-1045, Cys-1040/Cys-1054, Cys-1056/Cys-1069, Cys-1075/Cys-1086, Cys-1081/Cys-1095, Cys-1097/Cys-1110, Cys-1116/Cys-1127, Cys-1122/Cys-1136, Cys-1138/Cys-1151, Cys-1157/Cys-1169, Cys-1164/Cys-1178, Cys-1180/Cys-1192, Cys-1198/Cys-1210, Cys-1204/Cys-1219, Cys-1221/Cys-1234, Cys-1240/Cys-1252, Cys-1246/Cys-1261, Cys-1263/Cys-1276, Cys-1282/Cys-1294, Cys-1289/Cys-1303, Cys-1305/Cys-1319, Cys-1340/Cys-1363, Cys-1350/Cys-1375, Cys-1364/Cys-1380, and Cys-1365/Cys-1392. Residues 907-948 (DIDECAQVRHLCSQGRCENTEGSFLCVCPAGFMASEEGTNCI) enclose the EGF-like 5; calcium-binding domain. Ser-929 carries O-linked (Glc) serine glycosylation. Residues 949–989 (DVDECLRPDMCRDGRCINTAGAFRCEYCDSGYRMSRRGYCE) form the EGF-like 6; calcium-binding domain. Asn-966 is modified ((3R)-3-hydroxyasparagine). The 40-residue stretch at 990-1029 (DIDECLKPSTCPEEQCVNTPGSYQCVPCTEGFRGWNGQCL) folds into the EGF-like 7; calcium-binding domain. Ser-1011 carries an O-linked (Glc) serine glycan. One can recognise an EGF-like 8; calcium-binding domain in the interval 1030–1070 (DVDECLQPKVCTNGSCTNLEGSYMCSCHRGYSPTPDHRHCQ). An N-linked (GlcNAc...) asparagine glycan is attached at Asn-1042. An O-linked (Glc) serine glycan is attached at Ser-1051. Residues 1071 to 1111 (DIDECQQGNLCMNGQCRNTDGSFRCTCGQGYQLSAAKDQCE) form the EGF-like 9; calcium-binding domain. The region spanning 1112-1152 (DIDECEHHHLCSHGQCRNTEGSFQCVCNQGYRASVLGDHCE) is the EGF-like 10; calcium-binding domain. (3R)-3-hydroxyasparagine is present on Asn-1129. Residue Ser-1133 is glycosylated (O-linked (Glc) serine). The EGF-like 11; calcium-binding domain maps to 1153 to 1193 (DINECLEDSSVCQGGDCINTAGSYDCTCPDGFQLNDNKGCQ). Residues 1194–1235 (DINECAQPGLCGSHGECLNTQGSFHCVCEQGFSISADGRTCE) enclose the EGF-like 12; calcium-binding domain. A glycan (O-linked (Glc) serine) is linked at Ser-1216. The EGF-like 13; calcium-binding domain occupies 1236 to 1277 (DIDECVNNTVCDSHGFCDNTAGSFRCLCYQGFQAPQDGQGCV). Asn-1242 carries N-linked (GlcNAc...) asparagine glycosylation. Residues 1278–1320 (DVNECELLSGVCGEAFCENVEGSFLCVCADENQEYSPMTGQCR) form the EGF-like 14; calcium-binding domain. An 8-Cys3 region region spans residues 1335-1402 (EEKKECYYNL…PRGKGLVPAG (68 aa)). Residues 1338-1392 (KECYYNLNDASLCDNVLAPNVTKQECCCTSGAGWGDNCEIFPCPVQGTAEFTEMC) enclose the TB 3 domain. Residue Asn-1357 is glycosylated (N-linked (GlcNAc...) asparagine). Ser-1405 carries the phosphoserine modification. Positions 1415–1457 (DADECLLFGEEICKNGYCLNTQPGYECYCKQGTYYDPVKLQCF) constitute an EGF-like 15; calcium-binding domain. Disulfide bonds link Cys-1419–Cys-1432, Cys-1427–Cys-1441, Cys-1443–Cys-1456, Cys-1462–Cys-1473, Cys-1468–Cys-1482, Cys-1484–Cys-1497, Cys-1517–Cys-1541, Cys-1527–Cys-1553, Cys-1542–Cys-1556, and Cys-1543–Cys-1568. In terms of domain architecture, EGF-like 16; calcium-binding spans 1458-1498 (DMDECQDPNSCIDGQCVNTEGSYNCFCTHPMVLDASEKRCV). Residue Ser-1479 is glycosylated (O-linked (Glc) serine). Positions 1498–1712 (VQPTESNEQI…LNLDKESDLE (215 aa)) are C-terminal domain. Residues 1515 to 1568 (DLCWEHLSEEYVCSRPLVGKQTTYTECCCLYGEAWGMQCALCPMKDSDDYAQLC) form the TB 4 domain. Phosphoserine is present on residues Ser-1588 and Ser-1607. One can recognise an EGF-like 17 domain in the interval 1612–1652 (QAEECGILNGCENGRCVRVQEGYTCDCFDGYHLDMAKMTCV). Cystine bridges form between Cys-1616–Cys-1627, Cys-1622–Cys-1636, Cys-1638–Cys-1651, Cys-1657–Cys-1672, Cys-1667–Cys-1681, and Cys-1683–Cys-1696. The EGF-like 18; calcium-binding domain maps to 1653-1697 (DVNECSELNNRMSLCKNAKCINTEGSYKCLCLPGYIPSDKPNYCT). Ser-1678 is a glycosylation site (O-linked (Glc) serine).

It belongs to the LTBP family. In terms of assembly, interacts with TGFB1; associates via disulfide bonds with the Latency-associated peptide chain (LAP) regulatory chain of TGFB1, leading to regulate activation of TGF-beta-1. LTBP1 does not bind directly to TGF-beta-1, the active chain of TGFB1. Interacts (via C-terminal domain) with FBN1 (via N-terminal domain). Interacts with FBN2. Interacts with ADAMTSL2. Interacts with EFEMP2. In terms of processing, contains hydroxylated asparagine residues. Two intrachain disulfide bonds from the TB3 domain are rearranged upon TGFB1 binding, and form interchain bonds with TGFB1 propeptide, anchoring it to the extracellular matrix. Post-translationally, O-glycosylated on serine residues by POGLUT2 and POGLUT3.

It is found in the secreted. The protein localises to the extracellular space. Its subcellular location is the extracellular matrix. In terms of biological role, key regulator of transforming growth factor beta (TGFB1, TGFB2 and TGFB3) that controls TGF-beta activation by maintaining it in a latent state during storage in extracellular space. Associates specifically via disulfide bonds with the Latency-associated peptide (LAP), which is the regulatory chain of TGF-beta, and regulates integrin-dependent activation of TGF-beta. Outcompeted by LRRC32/GARP for binding to LAP regulatory chain of TGF-beta. The protein is Latent-transforming growth factor beta-binding protein 1 of Mus musculus (Mouse).